Here is a 105-residue protein sequence, read N- to C-terminus: Ribonuclease P protein component 4 (105 aa).

Residues Cys-63, Cys-66, Cys-89, and Cys-92 each contribute to the Zn(2+) site.

The protein belongs to the eukaryotic/archaeal RNase P protein component 4 family. In terms of assembly, consists of a catalytic RNA component and at least 4-5 protein subunits. Zn(2+) is required as a cofactor.

It is found in the cytoplasm. It catalyses the reaction Endonucleolytic cleavage of RNA, removing 5'-extranucleotides from tRNA precursor.. In terms of biological role, part of ribonuclease P, a protein complex that generates mature tRNA molecules by cleaving their 5'-ends. The polypeptide is Ribonuclease P protein component 4 (Methanoculleus marisnigri (strain ATCC 35101 / DSM 1498 / JR1)).